The sequence spans 855 residues: Replication factor C small subunit (855 aa).

One can recognise a DOD-type homing endonuclease domain in the interval 185–308; that stretch reads WLGYFLGGGY…IAYALAGFGI (124 aa).

It belongs to the activator 1 small subunits family. RfcS subfamily. In terms of assembly, heteromultimer composed of small subunits (RfcS) and large subunits (RfcL). Post-translationally, this protein undergoes a protein self splicing that involves a post-translational excision of the intervening region (intein) followed by peptide ligation.

Its function is as follows. Part of the RFC clamp loader complex which loads the PCNA sliding clamp onto DNA. This is Replication factor C small subunit (rfcS) from Pyrococcus horikoshii (strain ATCC 700860 / DSM 12428 / JCM 9974 / NBRC 100139 / OT-3).